Consider the following 114-residue polypeptide: rRNA-processing protein cgrA (114 aa).

The segment at 1–96 (MSASESAPSA…YDKMAEKMHR (96 aa)) is disordered. Residues 40–101 (AKRLEARKHQ…EKMHRKRVER (62 aa)) are a coiled coil. A compositionally biased stretch (basic and acidic residues) spans 41-93 (KRLEARKHQEAVKEHERELKEEKEAERQAHIQRIKDRRAAKEEKERYDKMAEK).

Belongs to the CGR1 family.

The protein localises to the nucleus. It localises to the nucleolus. Involved in nucleolar integrity and required for processing of the pre-rRNA for the 60S ribosome subunit. The protein is rRNA-processing protein cgrA (cgrA) of Aspergillus terreus (strain NIH 2624 / FGSC A1156).